The chain runs to 183 residues: MGKWVSVAEKRQFLKWFLTQQLKRKDAKRILEYLLQHYHLLEQVMFTEEIRGRERTLVISTLQSDEPGFAFYLYRRKIEDPIRALGELQANPADPIYLILHFHGKAQNHQYLQMLDSESREYIKRFKQFQAYKEETDSLIEAVLIENEKKMLLQQIDEALDLKDERRFKDLVKKLQELDRRSS.

The protein belongs to the UPF0302 family.

In Halalkalibacterium halodurans (strain ATCC BAA-125 / DSM 18197 / FERM 7344 / JCM 9153 / C-125) (Bacillus halodurans), this protein is UPF0302 protein BH3876.